Reading from the N-terminus, the 491-residue chain is Fibrinogen beta chain (491 aa).

The N-terminal stretch at 1–30 is a signal peptide; sequence MKRMVSWSFHKLKTMKHLLLLLLCVFLVKS. A Pyrrolidone carboxylic acid modification is found at glutamine 31. The segment at 44-75 is disordered; the sequence is RGHRPLDKKREEAPSLRPAPPPISGGGYRARP. The segment at 45–47 is beta-chain polymerization, binding distal domain of another fibrin; the sequence is GHR. Over residues 47-57 the composition is skewed to basic and acidic residues; that stretch reads RPLDKKREEAP. A coiled-coil region spans residues 157 to 222; the sequence is KRQKQVKDNE…ESDVSAQMEY (66 aa). 2 disulfides stabilise this stretch: cysteine 231–cysteine 316 and cysteine 241–cysteine 270. In terms of domain architecture, Fibrinogen C-terminal spans 232–488; sequence NIPVVSGKEC…KMSMKIRPFF (257 aa). Asparagine 394 is a glycosylation site (N-linked (GlcNAc...) asparagine). A disulfide bridge links cysteine 424 with cysteine 437.

As to quaternary structure, heterohexamer; disulfide linked. Contains 2 sets of 3 non-identical chains (alpha, beta and gamma). The 2 heterotrimers are in head to head conformation with the N-termini in a small central domain. Conversion of fibrinogen to fibrin is triggered by thrombin, which cleaves fibrinopeptides A and B from alpha and beta chains, and thus exposes the N-terminal polymerization sites responsible for the formation of the soft clot. The soft clot is converted into the hard clot by factor XIIIA which catalyzes the epsilon-(gamma-glutamyl)lysine cross-linking between gamma chains (stronger) and between alpha chains (weaker) of different monomers. Detected in blood plasma (at protein level).

The protein localises to the secreted. Cleaved by the protease thrombin to yield monomers which, together with fibrinogen alpha (FGA) and fibrinogen gamma (FGG), polymerize to form an insoluble fibrin matrix. Fibrin has a major function in hemostasis as one of the primary components of blood clots. In addition, functions during the early stages of wound repair to stabilize the lesion and guide cell migration during re-epithelialization. Was originally thought to be essential for platelet aggregation, based on in vitro studies using anticoagulated blood. However subsequent studies have shown that it is not absolutely required for thrombus formation in vivo. Enhances expression of SELP in activated platelets. Maternal fibrinogen is essential for successful pregnancy. Fibrin deposition is also associated with infection, where it protects against IFNG-mediated hemorrhage. May also facilitate the antibacterial immune response via both innate and T-cell mediated pathways. The sequence is that of Fibrinogen beta chain (FGB) from Homo sapiens (Human).